The primary structure comprises 202 residues: Orotate phosphoribosyltransferase (202 aa).

E113–S121 contributes to the 5-phospho-alpha-D-ribose 1-diphosphate binding site. 2 residues coordinate orotate: T117 and R145.

This sequence belongs to the purine/pyrimidine phosphoribosyltransferase family. PyrE subfamily. As to quaternary structure, homodimer. Mg(2+) serves as cofactor.

It catalyses the reaction orotidine 5'-phosphate + diphosphate = orotate + 5-phospho-alpha-D-ribose 1-diphosphate. Its pathway is pyrimidine metabolism; UMP biosynthesis via de novo pathway; UMP from orotate: step 1/2. Catalyzes the transfer of a ribosyl phosphate group from 5-phosphoribose 1-diphosphate to orotate, leading to the formation of orotidine monophosphate (OMP). The chain is Orotate phosphoribosyltransferase from Campylobacter lari (strain RM2100 / D67 / ATCC BAA-1060).